The chain runs to 576 residues: 2-isopropylmalate synthase (576 aa).

The Pyruvate carboxyltransferase domain occupies 31–305 (PIWMSTDLRD…DPGLDFSHVN (275 aa)). Mg(2+) contacts are provided by Asp-40, His-244, His-246, and Asn-280. Residues 437–576 (ADGPIGYVSH…RGMAPSMELA (140 aa)) are regulatory domain.

The protein belongs to the alpha-IPM synthase/homocitrate synthase family. LeuA type 2 subfamily. As to quaternary structure, homodimer. Mg(2+) is required as a cofactor.

It localises to the cytoplasm. It catalyses the reaction 3-methyl-2-oxobutanoate + acetyl-CoA + H2O = (2S)-2-isopropylmalate + CoA + H(+). The protein operates within amino-acid biosynthesis; L-leucine biosynthesis; L-leucine from 3-methyl-2-oxobutanoate: step 1/4. In terms of biological role, catalyzes the condensation of the acetyl group of acetyl-CoA with 3-methyl-2-oxobutanoate (2-ketoisovalerate) to form 3-carboxy-3-hydroxy-4-methylpentanoate (2-isopropylmalate). This Ralstonia nicotianae (strain ATCC BAA-1114 / GMI1000) (Ralstonia solanacearum) protein is 2-isopropylmalate synthase.